Here is a 103-residue protein sequence, read N- to C-terminus: Urease subunit beta (103 aa).

The protein belongs to the urease beta subunit family. As to quaternary structure, heterotrimer of UreA (gamma), UreB (beta) and UreC (alpha) subunits. Three heterotrimers associate to form the active enzyme.

It localises to the cytoplasm. It catalyses the reaction urea + 2 H2O + H(+) = hydrogencarbonate + 2 NH4(+). Its pathway is nitrogen metabolism; urea degradation; CO(2) and NH(3) from urea (urease route): step 1/1. This Mycobacterium marinum (strain ATCC BAA-535 / M) protein is Urease subunit beta.